We begin with the raw amino-acid sequence, 143 residues long: Ribonuclease VapC33 (143 aa).

Positions 5 and 108 each coordinate Mg(2+).

This sequence belongs to the PINc/VapC protein family. The cofactor is Mg(2+).

Its function is as follows. Toxic component of a type II toxin-antitoxin (TA) system. An RNase. Its toxic effect is neutralized by coexpression with cognate antitoxin VapB33. This chain is Ribonuclease VapC33, found in Mycobacterium tuberculosis (strain CDC 1551 / Oshkosh).